Consider the following 222-residue polypeptide: MAYSIEVNEIADGWKKLVEKIMHDGREIRDERGSLTREVMNTVVTIKKPLGKSDDFYHIRRGSLLNIKVPEGYFWSGEKLEKYSEQFLSGDRKGFVYTYGNRLRAHFGVDQLDEAIRRLKNCTESRRATMVTWDPPEDTASDEVPCMILVDFKIRDGRLFTTALWRSHDIYGAWFPNAVGLAYLADHVAAEVGVEVGHITIHSISAHIYEVNFKEAEEVIKW.

Residue C146 is part of the active site.

The protein belongs to the thymidylate synthase family. Archaeal-type ThyA subfamily. Monomer.

It localises to the cytoplasm. It participates in pyrimidine metabolism; dTTP biosynthesis. Its function is as follows. May catalyze the biosynthesis of dTMP using an unknown cosubstrate. This chain is Putative thymidylate synthase, found in Methanothermobacter thermautotrophicus (strain ATCC 29096 / DSM 1053 / JCM 10044 / NBRC 100330 / Delta H) (Methanobacterium thermoautotrophicum).